Consider the following 449-residue polypeptide: C4-dicarboxylate transport protein (449 aa).

8 helical membrane-spanning segments follow: residues 20-42 (YLQLYFWVIIAIILGALLGHCYP), 62-84 (IISPVIFLTIVTGIASVAHVGTV), 91-113 (AMVYFLFFSTLALLLGLVVAHVV), 164-181 (ILQVLFVAVLFGIALALA), 202-224 (LVQMLMKMAPIGAFGAIAFTIGK), 239-261 (SFYLTSLLFVLVILGAVSWFSGF), 344-366 (LALFLVAMLSSKGAAGVSGAGFI), and 370-389 (ATLTVVPEVPIAGMALILGV).

This sequence belongs to the dicarboxylate/amino acid:cation symporter (DAACS) (TC 2.A.23) family.

The protein localises to the cell inner membrane. In terms of biological role, responsible for the transport of dicarboxylates such as succinate, fumarate, and malate from the periplasm across the inner membrane. This chain is C4-dicarboxylate transport protein (dctA), found in Xylella fastidiosa (strain 9a5c).